A 390-amino-acid chain; its full sequence is MPDLKTMMLNFGPQHPAAHGVLRLVLEMDGEVIERADPHIGLLHRGTEKLIEHKTYLQALPYFDRLDYVSPMSQEHAYSLCVEKLLQCEIPIRAKYLRVLFCELTRILNHLLNISSQALDVGAMTPLLWLFEEREKILEFYERASGARFHAAYIRPGGLAADIPEGLIEDIAKFIEQFPKYIDDVDELLTENRIWKQRTVGISEISIKQALDWGFSGPMLRAAGLAWDLRKSQPYEIYDQLDFDIPIGQNGDCYDRYLVRMAEIRQSVSLVKQCIEKMPEGPIKTEDRKISPPPRAEMKESMEAMIHHFKLYSEGYHVPEGEAYVAVEAPKGEFGVYIVSDGTNRPYRCRIRAPGFAHLQALDFMAKGHMLADIAAIIGSLDIVFGEIDR.

Belongs to the complex I 49 kDa subunit family. As to quaternary structure, NDH-1 is composed of 14 different subunits. Subunits NuoB, C, D, E, F, and G constitute the peripheral sector of the complex.

It localises to the cell membrane. It catalyses the reaction a quinone + NADH + 5 H(+)(in) = a quinol + NAD(+) + 4 H(+)(out). Its function is as follows. NDH-1 shuttles electrons from NADH, via FMN and iron-sulfur (Fe-S) centers, to quinones in the respiratory chain. The immediate electron acceptor for the enzyme in this species is believed to be ubiquinone. Couples the redox reaction to proton translocation (for every two electrons transferred, four hydrogen ions are translocated across the cytoplasmic membrane), and thus conserves the redox energy in a proton gradient. The sequence is that of NADH-quinone oxidoreductase subunit D from Wolbachia pipientis subsp. Culex pipiens (strain wPip).